Here is a 480-residue protein sequence, read N- to C-terminus: Protein nucleotidyltransferase YdiU (480 aa).

ATP is bound by residues Gly87, Gly89, Arg90, Lys110, Asp122, Gly123, Arg173, and Arg180. The active-site Proton acceptor is the Asp249. Residues Asn250 and Asp259 each contribute to the Mg(2+) site. Asp259 lines the ATP pocket.

It belongs to the SELO family. The cofactor is Mg(2+). Requires Mn(2+) as cofactor.

It carries out the reaction L-seryl-[protein] + ATP = 3-O-(5'-adenylyl)-L-seryl-[protein] + diphosphate. The enzyme catalyses L-threonyl-[protein] + ATP = 3-O-(5'-adenylyl)-L-threonyl-[protein] + diphosphate. It catalyses the reaction L-tyrosyl-[protein] + ATP = O-(5'-adenylyl)-L-tyrosyl-[protein] + diphosphate. The catalysed reaction is L-histidyl-[protein] + UTP = N(tele)-(5'-uridylyl)-L-histidyl-[protein] + diphosphate. It carries out the reaction L-seryl-[protein] + UTP = O-(5'-uridylyl)-L-seryl-[protein] + diphosphate. The enzyme catalyses L-tyrosyl-[protein] + UTP = O-(5'-uridylyl)-L-tyrosyl-[protein] + diphosphate. Nucleotidyltransferase involved in the post-translational modification of proteins. It can catalyze the addition of adenosine monophosphate (AMP) or uridine monophosphate (UMP) to a protein, resulting in modifications known as AMPylation and UMPylation. The protein is Protein nucleotidyltransferase YdiU of Anoxybacillus flavithermus (strain DSM 21510 / WK1).